A 385-amino-acid polypeptide reads, in one-letter code: NADH-ubiquinone oxidoreductase chain 2 (385 aa).

10 helical membrane-spanning segments follow: residues 12-32, 34-50, 66-86, 112-132, 161-181, 200-220, 227-247, 268-288, 291-311, and 354-374; these read PVLVLMVALGSILLVSASNWL, VYLAIELPTLSLFILVA, FVLGALASGLFLFGCALLCGL, VITPIGSLLITGALLFKLSAA, VFSILVSIGPVANVLLIATIF, LAYSGIAHMGFVLWGIEIGTF, LIYMILYVIMSVCAFAMVLAL, AITLALTFLSIAGVPPLIGFF, WWILLSGITYQYYLVSILAVI, and LLIGASFYLMGFMIISPNLLL.

This sequence belongs to the complex I subunit 2 family.

Its subcellular location is the mitochondrion inner membrane. The catalysed reaction is a ubiquinone + NADH + 5 H(+)(in) = a ubiquinol + NAD(+) + 4 H(+)(out). Functionally, core subunit of the mitochondrial membrane respiratory chain NADH dehydrogenase (Complex I) that is believed to belong to the minimal assembly required for catalysis. Complex I functions in the transfer of electrons from NADH to the respiratory chain. The immediate electron acceptor for the enzyme is believed to be ubiquinone. The chain is NADH-ubiquinone oxidoreductase chain 2 (ND2) from Metridium senile (Brown sea anemone).